Reading from the N-terminus, the 205-residue chain is High frequency lysogenization protein HflD homolog (205 aa).

Belongs to the HflD family.

The protein localises to the cytoplasm. It localises to the cell inner membrane. In Shewanella baltica (strain OS223), this protein is High frequency lysogenization protein HflD homolog.